The sequence spans 404 residues: Corticosteroid-binding globulin (404 aa).

The signal sequence occupies residues 1 to 22 (MLPTLYTCLLWLSTSGLWTVQA). N-linked (GlcNAc...) asparagine glycosylation is found at asparagine 95, asparagine 119, and asparagine 175. Glutamine 253 contributes to the cortisol binding site. Asparagine 259 carries N-linked (GlcNAc...) asparagine glycosylation. Residue glutamine 285 coordinates cortisol. An N-linked (GlcNAc...) asparagine glycan is attached at asparagine 326. Tryptophan 392 provides a ligand contact to cortisol.

This sequence belongs to the serpin family. Post-translationally, glycosylation in position Asn-259 is needed for steroid binding.

Its subcellular location is the secreted. Functionally, major transport protein for glucocorticoids and progestins in the blood of almost all vertebrate species. The chain is Corticosteroid-binding globulin (SERPINA6) from Bos taurus (Bovine).